The sequence spans 536 residues: CTP synthase (536 aa).

The amidoligase domain stretch occupies residues 1–268 (MSFKSIFLTG…VDFLLSKFGF (268 aa)). S14 contributes to the CTP binding site. Residue S14 participates in UTP binding. Residue 15–20 (SLGKGL) coordinates ATP. An L-glutamine-binding site is contributed by Y55. Position 72 (D72) interacts with ATP. Residues D72 and E142 each coordinate Mg(2+). CTP contacts are provided by residues 149-151 (DIE), 188-193 (KTKPTQ), and K224. Residues 188–193 (KTKPTQ) and K224 contribute to the UTP site. One can recognise a Glutamine amidotransferase type-1 domain in the interval 294–532 (RIGLVGKYLE…LSAALDYSLE (239 aa)). Residue G353 coordinates L-glutamine. C380 acts as the Nucleophile; for glutamine hydrolysis in catalysis. L-glutamine is bound by residues 381-384 (LGMQ), E404, and R460. Catalysis depends on residues H505 and E507.

This sequence belongs to the CTP synthase family. Homotetramer.

It catalyses the reaction UTP + L-glutamine + ATP + H2O = CTP + L-glutamate + ADP + phosphate + 2 H(+). The catalysed reaction is L-glutamine + H2O = L-glutamate + NH4(+). It carries out the reaction UTP + NH4(+) + ATP = CTP + ADP + phosphate + 2 H(+). It participates in pyrimidine metabolism; CTP biosynthesis via de novo pathway; CTP from UDP: step 2/2. Allosterically activated by GTP, when glutamine is the substrate; GTP has no effect on the reaction when ammonia is the substrate. The allosteric effector GTP functions by stabilizing the protein conformation that binds the tetrahedral intermediate(s) formed during glutamine hydrolysis. Inhibited by the product CTP, via allosteric rather than competitive inhibition. Its function is as follows. Catalyzes the ATP-dependent amination of UTP to CTP with either L-glutamine or ammonia as the source of nitrogen. Regulates intracellular CTP levels through interactions with the four ribonucleotide triphosphates. The sequence is that of CTP synthase from Chlamydia muridarum (strain MoPn / Nigg).